We begin with the raw amino-acid sequence, 542 residues long: CTP synthase (542 aa).

Positions 1 to 265 (MARYVFITGG…DDEVLAAFGI (265 aa)) are amidoligase domain. Residue serine 13 coordinates CTP. Serine 13 is a UTP binding site. Residues 14–19 (SLGKGI) and aspartate 71 each bind ATP. Residues aspartate 71 and glutamate 139 each contribute to the Mg(2+) site. CTP contacts are provided by residues 146–148 (DIE), 186–191 (KTKPTQ), and lysine 222. Residues 186-191 (KTKPTQ) and lysine 222 contribute to the UTP site. A Glutamine amidotransferase type-1 domain is found at 291-541 (TIAIVGKYTG…IEAATEQSRL (251 aa)). Glycine 353 is a binding site for L-glutamine. Cysteine 380 serves as the catalytic Nucleophile; for glutamine hydrolysis. Residues 381–384 (FGMQ), glutamate 404, and arginine 469 each bind L-glutamine. Active-site residues include histidine 514 and glutamate 516.

Belongs to the CTP synthase family. As to quaternary structure, homotetramer.

It carries out the reaction UTP + L-glutamine + ATP + H2O = CTP + L-glutamate + ADP + phosphate + 2 H(+). The catalysed reaction is L-glutamine + H2O = L-glutamate + NH4(+). It catalyses the reaction UTP + NH4(+) + ATP = CTP + ADP + phosphate + 2 H(+). It functions in the pathway pyrimidine metabolism; CTP biosynthesis via de novo pathway; CTP from UDP: step 2/2. Its activity is regulated as follows. Allosterically activated by GTP, when glutamine is the substrate; GTP has no effect on the reaction when ammonia is the substrate. The allosteric effector GTP functions by stabilizing the protein conformation that binds the tetrahedral intermediate(s) formed during glutamine hydrolysis. Inhibited by the product CTP, via allosteric rather than competitive inhibition. Catalyzes the ATP-dependent amination of UTP to CTP with either L-glutamine or ammonia as the source of nitrogen. Regulates intracellular CTP levels through interactions with the four ribonucleotide triphosphates. The polypeptide is CTP synthase (Rhizobium johnstonii (strain DSM 114642 / LMG 32736 / 3841) (Rhizobium leguminosarum bv. viciae)).